The primary structure comprises 313 residues: MGQTNVTSWRDFVFLGFSSSGELQLLLFALFLSLYLVTLTSNVFIIIAIRLDSHLHTPMYLFLSFLSFSETCYTLGIIPRMLSGLAGGDQAISYVGCAAQMFFSASWACTNCFLLAAMGFDRYVAICAPLHYASHMNPTLCAQLVITSFLTGYLFGLGMTLVIFHLSFCSSHEIQHFFCDTPPVLSLACGDTGPSELRIFILSLLVLLVSFFFITISYAYILAAILRIPSAEGQKKAFSTCASHLTVVIIHYGCASFVYLRPKASYSLERDQLIAMTYTVVTPLLNPIVYSLRNRAIQTALRNAFRGRLLGKG.

The Extracellular portion of the chain corresponds to M1–L25. The N-linked (GlcNAc...) asparagine glycan is linked to N5. The chain crosses the membrane as a helical span at residues L26 to I46. Topologically, residues I47–H54 are cytoplasmic. The chain crosses the membrane as a helical span at residues L55–L75. The Extracellular segment spans residues G76–A99. A disulfide bridge links C97 with C189. A helical membrane pass occupies residues Q100–F120. The Cytoplasmic portion of the chain corresponds to D121–T139. Residues L140 to T160 traverse the membrane as a helical segment. Residues L161–L197 lie on the Extracellular side of the membrane. Residues R198 to S217 traverse the membrane as a helical segment. The Cytoplasmic portion of the chain corresponds to Y218 to A237. The helical transmembrane segment at F238–V258 threads the bilayer. Residues Y259–D271 lie on the Extracellular side of the membrane. The chain crosses the membrane as a helical span at residues Q272–L292. Topologically, residues R293–G313 are cytoplasmic.

Belongs to the G-protein coupled receptor 1 family.

The protein resides in the cell membrane. Odorant receptor. The sequence is that of Olfactory receptor 10Z1 (OR10Z1) from Homo sapiens (Human).